The chain runs to 513 residues: ATP synthase subunit alpha (513 aa).

ATP is bound at residue 169 to 176 (GDRQVGKT).

This sequence belongs to the ATPase alpha/beta chains family. F-type ATPases have 2 components, CF(1) - the catalytic core - and CF(0) - the membrane proton channel. CF(1) has five subunits: alpha(3), beta(3), gamma(1), delta(1), epsilon(1). CF(0) has three main subunits: a(1), b(2) and c(9-12). The alpha and beta chains form an alternating ring which encloses part of the gamma chain. CF(1) is attached to CF(0) by a central stalk formed by the gamma and epsilon chains, while a peripheral stalk is formed by the delta and b chains.

It is found in the cell inner membrane. It catalyses the reaction ATP + H2O + 4 H(+)(in) = ADP + phosphate + 5 H(+)(out). In terms of biological role, produces ATP from ADP in the presence of a proton gradient across the membrane. The alpha chain is a regulatory subunit. This chain is ATP synthase subunit alpha, found in Aeromonas salmonicida (strain A449).